Consider the following 298-residue polypeptide: tRNA(Met) cytidine acetate ligase (298 aa).

ATP contacts are provided by residues 6-19 (IAEY…HIYQ), glycine 100, asparagine 157, and arginine 182.

Belongs to the TmcAL family.

It is found in the cytoplasm. It carries out the reaction cytidine(34) in elongator tRNA(Met) + acetate + ATP = N(4)-acetylcytidine(34) in elongator tRNA(Met) + AMP + diphosphate. In terms of biological role, catalyzes the formation of N(4)-acetylcytidine (ac(4)C) at the wobble position of elongator tRNA(Met), using acetate and ATP as substrates. First activates an acetate ion to form acetyladenylate (Ac-AMP) and then transfers the acetyl group to tRNA to form ac(4)C34. This Mycoplasmopsis pulmonis (strain UAB CTIP) (Mycoplasma pulmonis) protein is tRNA(Met) cytidine acetate ligase.